The sequence spans 490 residues: Argininosuccinate lyase (490 aa).

Disordered regions lie at residues 426-452 (DPES…LSAA) and 469-490 (ALAT…TAPE). A compositionally biased stretch (low complexity) spans 440–452 (PAPESMAAALSAA). Positions 469–480 (ALATAADERERV) are enriched in basic and acidic residues.

This sequence belongs to the lyase 1 family. Argininosuccinate lyase subfamily.

The protein resides in the cytoplasm. The enzyme catalyses 2-(N(omega)-L-arginino)succinate = fumarate + L-arginine. The protein operates within amino-acid biosynthesis; L-arginine biosynthesis; L-arginine from L-ornithine and carbamoyl phosphate: step 3/3. The polypeptide is Argininosuccinate lyase (Natronomonas pharaonis (strain ATCC 35678 / DSM 2160 / CIP 103997 / JCM 8858 / NBRC 14720 / NCIMB 2260 / Gabara) (Halobacterium pharaonis)).